The sequence spans 1017 residues: Stereoselective keto-reductase af490 (1017 aa).

Residues 6-138 are N-terminal hotdog fold; the sequence is NELSGSQVPG…GRLRMTFAGH (133 aa). One can recognise a PKS/mFAS DH domain in the interval 6–311; it reads NELSGSQVPG…MSPIAPSTEK (306 aa). The tract at residues 8–306 is dehydratase (DH); that stretch reads LSGSQVPGAT…LEGLTMSPIA (299 aa). The C-terminal hotdog fold stretch occupies residues 153-311; the sequence is LRPVSISPFY…MSPIAPSTEK (159 aa). Residues 532–720 form a ketoreductase (KR) region; sequence QIRFLRAPFD…VQGGRLLIPR (189 aa).

The catalysed reaction is fumagillol + NADP(+) = 5-dehydrofumagillol + NADPH + H(+). Its pathway is secondary metabolite biosynthesis; terpenoid biosynthesis. Stereoselective keto-reductase; part of the gene cluster that mediates the biosynthesis of fumagillin, a meroterpenoid that has numerous biological activities including irreversible inhibition of human type 2 methionine aminopeptidase (METAP2). Within the pathway, the keto-reductase af490 acts as a 5-dehydrofumagillol 5-reductase that stereoselectively reduces 5-keto-fumagillol to 5R-hydroxy-seco-sesquiterpene. The pathway begins with the conversion of farnesyl pyrophosphate (FPP) to beta-trans-bergamotene by the membrane-bound beta-trans-bergamotene synthase af520. The multifunctional cytochrome P450 monooxygenase af510 then converts beta-trans-bergamotene into 5-keto-demethoxyfumagillol via several oxydation steps. 5-keto-demethoxyfumagillol is then subjected to successive C-6 hydroxylation and O-methylation by the dioxygenase af480 and O-methyltransferase af390-400, respectively, to yield 5-keto-fumagillol, which is then stereoselectively reduced by the keto-reductase af490 to 5R-hydroxy-seco-sesquiterpene. The next step is the polyketide transferase af380-catalyzed transfer of a dodecapentaenoyl group synthesized by the polyketide synthase af370 onto 5R-hydroxy-seco-sesquiterpene which leads to the production of prefumagillin. Finally, oxidative cleavage by the monooxygenase af470 converts prefumagillin to fumagillin. The protein is Stereoselective keto-reductase af490 of Aspergillus fumigatus (strain ATCC MYA-4609 / CBS 101355 / FGSC A1100 / Af293) (Neosartorya fumigata).